A 489-amino-acid polypeptide reads, in one-letter code: NADH-quinone oxidoreductase subunit N (489 aa).

14 consecutive transmembrane segments (helical) span residues A15–I35, G44–V64, F78–L98, I106–A126, L131–F151, L166–A186, L209–L229, P244–V264, W278–V298, M306–G326, A333–I353, L378–F398, G412–L432, and I459–L479.

This sequence belongs to the complex I subunit 2 family. As to quaternary structure, NDH-1 is composed of 14 different subunits. Subunits NuoA, H, J, K, L, M, N constitute the membrane sector of the complex.

It is found in the cell membrane. The catalysed reaction is a quinone + NADH + 5 H(+)(in) = a quinol + NAD(+) + 4 H(+)(out). NDH-1 shuttles electrons from NADH, via FMN and iron-sulfur (Fe-S) centers, to quinones in the respiratory chain. The immediate electron acceptor for the enzyme in this species is believed to be ubiquinone. Couples the redox reaction to proton translocation (for every two electrons transferred, four hydrogen ions are translocated across the cytoplasmic membrane), and thus conserves the redox energy in a proton gradient. This Chloroflexus aggregans (strain MD-66 / DSM 9485) protein is NADH-quinone oxidoreductase subunit N.